A 194-amino-acid polypeptide reads, in one-letter code: Crossover junction endodeoxyribonuclease RuvC (194 aa).

Catalysis depends on residues D7, E68, and D141. Residues D7, E68, and D141 each coordinate Mg(2+). The disordered stretch occupies residues 162–194 (GGEREQHLTAAQRQWAEAAQNSTRRRKNSDRGM). Basic residues predominate over residues 184 to 194 (TRRRKNSDRGM).

The protein belongs to the RuvC family. Homodimer which binds Holliday junction (HJ) DNA. The HJ becomes 2-fold symmetrical on binding to RuvC with unstacked arms; it has a different conformation from HJ DNA in complex with RuvA. In the full resolvosome a probable DNA-RuvA(4)-RuvB(12)-RuvC(2) complex forms which resolves the HJ. Mg(2+) is required as a cofactor.

The protein localises to the cytoplasm. The catalysed reaction is Endonucleolytic cleavage at a junction such as a reciprocal single-stranded crossover between two homologous DNA duplexes (Holliday junction).. Functionally, the RuvA-RuvB-RuvC complex processes Holliday junction (HJ) DNA during genetic recombination and DNA repair. Endonuclease that resolves HJ intermediates. Cleaves cruciform DNA by making single-stranded nicks across the HJ at symmetrical positions within the homologous arms, yielding a 5'-phosphate and a 3'-hydroxyl group; requires a central core of homology in the junction. The consensus cleavage sequence is 5'-(A/T)TT(C/G)-3'. Cleavage occurs on the 3'-side of the TT dinucleotide at the point of strand exchange. HJ branch migration catalyzed by RuvA-RuvB allows RuvC to scan DNA until it finds its consensus sequence, where it cleaves and resolves the cruciform DNA. In Bifidobacterium longum subsp. infantis (strain ATCC 15697 / DSM 20088 / JCM 1222 / NCTC 11817 / S12), this protein is Crossover junction endodeoxyribonuclease RuvC.